The primary structure comprises 154 residues: Protein X (154 aa).

A mitochondrial targeting sequence region spans residues 68 to 117 (PCALRFTSARRMETTVNAHQILPKVLHKRTLGLSAMSTTDLEAYFKDCLF).

The protein belongs to the orthohepadnavirus protein X family. As to quaternary structure, may form homodimer. May interact with host CEBPA, CFLAR, CREB1, DDB1, E4F1, HBXIP, HSPD1/HSP60, NFKBIA, POLR2E and SMAD4. Interacts with host SMC5-SMC6 complex and induces its degradation. Interacts with host TRPC4AP; leading to prevent ubiquitination of TRPC4AP. Interacts with host PLSCR1; this interaction promotes ubiquitination and degradation of HBx and impairs HBx-mediated cell proliferation. Post-translationally, a fraction may be phosphorylated in insect cells and HepG2 cells, a human hepatoblastoma cell line. Phosphorylated in vitro by host protein kinase C or mitogen-activated protein kinase. N-acetylated in insect cells.

The protein resides in the host cytoplasm. It is found in the host nucleus. It localises to the host mitochondrion. In terms of biological role, multifunctional protein that plays a role in silencing host antiviral defenses and promoting viral transcription. Does not seem to be essential for HBV infection. May be directly involved in development of cirrhosis and liver cancer (hepatocellular carcinoma). Most of cytosolic activities involve modulation of cytosolic calcium. The effect on apoptosis is controversial depending on the cell types in which the studies have been conducted. May induce apoptosis by localizing in mitochondria and causing loss of mitochondrial membrane potential. May also modulate apoptosis by binding host CFLAR, a key regulator of the death-inducing signaling complex (DISC). Promotes viral transcription by using the host E3 ubiquitin ligase DDB1 to target the SMC5-SMC6 complex to proteasomal degradation. This host complex would otherwise bind to viral episomal DNA, and prevents its transcription. Moderately stimulates transcription of many different viral and cellular transcription elements. Promoters and enhancers stimulated by HBx contain DNA binding sites for NF-kappa-B, AP-1, AP-2, c-EBP, ATF/CREB, or the calcium-activated factor NF-AT. In Hepatitis B virus genotype E subtype ayw4 (isolate Kou) (HBV-E), this protein is Protein X.